Consider the following 197-residue polypeptide: ATP-dependent Clp protease proteolytic subunit 2 (197 aa).

Ser-96 acts as the Nucleophile in catalysis. His-121 is a catalytic residue.

It belongs to the peptidase S14 family. As to quaternary structure, fourteen ClpP subunits assemble into 2 heptameric rings which stack back to back to give a disk-like structure with a central cavity, resembling the structure of eukaryotic proteasomes.

It is found in the cytoplasm. The catalysed reaction is Hydrolysis of proteins to small peptides in the presence of ATP and magnesium. alpha-casein is the usual test substrate. In the absence of ATP, only oligopeptides shorter than five residues are hydrolyzed (such as succinyl-Leu-Tyr-|-NHMec, and Leu-Tyr-Leu-|-Tyr-Trp, in which cleavage of the -Tyr-|-Leu- and -Tyr-|-Trp bonds also occurs).. In terms of biological role, cleaves peptides in various proteins in a process that requires ATP hydrolysis. Has a chymotrypsin-like activity. Plays a major role in the degradation of misfolded proteins. This is ATP-dependent Clp protease proteolytic subunit 2 from Synechococcus sp. (strain CC9605).